The following is a 1463-amino-acid chain: Nucleoporin NUP152 (1463 aa).

Disordered stretches follow at residues 1 to 199 (MDPP…GRPG), 339 to 568 (GIPD…ELPA), and 609 to 1064 (TTKK…FGNT). 6 stretches are compositionally biased toward polar residues: residues 32–42 (STNSNSVTANA), 81–92 (GPSSKLSQSVSA), 144–155 (TSSKATSFSGAP), 175–191 (TTYTQRVSSHPLTQSFP), 367–378 (PSSSTFTHTASP), and 416–472 (PAKT…SSNI). Acidic residues predominate over residues 481–498 (KDEDNESDTGSEAEAEDE). Composition is skewed to low complexity over residues 511 to 523 (GASSSAPSEGGES) and 616 to 630 (AAAPAEAPKEATPTT). 3 stretches are compositionally biased toward polar residues: residues 651 to 664 (IFGSTTNPTETSIP), 673 to 689 (PATSTTNSLFGATTSAA), and 720 to 746 (TTESPKTNLFQFGTPNKTETAPATQPQ). The stretch at 729-732 (FQFG) is one FXFG 1 repeat. Low complexity predominate over residues 753 to 768 (KPPSTETPTEKPATTS). Positions 777–789 (PATTSSLFGSATT) are enriched in polar residues. A compositionally biased stretch (low complexity) spans 803-813 (TTTPADKPTTT). Polar residues predominate over residues 814–828 (NLFGSTSTQATSGSD). The FXFG 2 repeat unit spans residues 835 to 838 (FAFG). Polar residues predominate over residues 840–863 (TTESKPTTSLFGSTTPAPATSTEN). A compositionally biased stretch (low complexity) spans 870–881 (ATTTSATPATNT). Polar residues-rich tracts occupy residues 900-923 (GSSTTTAAPVFQFGSTPASTSTEQ), 940-961 (GSTSATSTEQKPLFGSSTTMTE), 968-987 (SISTTATEQKPLFGSTSTTE), 998-1029 (STEQKSLFGITPSTTENNPASIFGNSSTSTEQ), and 1037-1055 (PASTEQKPLFGSTPSTTEN). The FXFG 3 repeat unit spans residues 910–913 (FQFG). FXFG repeat units lie at residues 1074 to 1077 (FNFG), 1127 to 1130 (FNFG), 1141 to 1144 (FTFG), and 1152 to 1155 (FTFG). Disordered stretches follow at residues 1155-1174 (GASSDSSNASNNASSAPIFS) and 1179-1217 (QPSSTPLFGQNNPPAASNIFASSLAPVGGTSTGTSKHVP). Over residues 1156 to 1170 (ASSDSSNASNNASSA) the composition is skewed to low complexity. The FXFG 8 repeat unit spans residues 1173–1176 (FSFG). Positions 1179 to 1199 (QPSSTPLFGQNNPPAASNIFA) are enriched in polar residues. The FXFG 9 repeat unit spans residues 1236–1239 (FTFG). Positions 1240–1271 (GASSLATTPAASTPEPSAANAAAAGEDQGASA) are enriched in low complexity. Disordered stretches follow at residues 1240 to 1335 (GASS…PWKV) and 1416 to 1463 (AALE…DEKK). The RanBD1 domain occupies 1289 to 1427 (GEEDESVVHE…LEEHKKANEK (139 aa)). A compositionally biased stretch (basic and acidic residues) spans 1418–1463 (LEEHKKANEKKDGEKNEESEKKDEKQEEKKNEEKKDEKEEKKDEKK).

In terms of assembly, the nuclear pore complex (NPC) constitutes the exclusive means of nucleocytoplasmic transport. NPCs allow the passive diffusion of ions and small molecules and the active, nuclear transport receptor-mediated bidirectional transport of macromolecules such as proteins, RNAs, ribonucleoparticles (RNPs), and ribosomal subunits across the nuclear envelope. The 55-60 MDa NPC is composed of at least 28 different subunits: AMO1, ELYS, GLE1, GLE2, MLP1, NDC1, NIC96, NSP1, NUP133, NUP145, NUP152, NUP159, NUP170, NUP188, NUP192, NUP37, NUP49, NUP53, NUP56, NUP57, NUP82, NUP84, NUP85, POM152, POM33, POM34, SEC13 and SEH1. Due to its 8-fold rotational symmetry, all subunits are present with 8 copies or multiples thereof.

It is found in the nucleus. It localises to the nuclear pore complex. The protein resides in the nucleus membrane. In terms of biological role, functions as a component of the nuclear pore complex (NPC). NPC components, collectively referred to as nucleoporins (NUPs), can play the role of both NPC structural components and of docking or interaction partners for transiently associated nuclear transport factors. Active directional transport is assured by both, a Phe-Gly (FG) repeat affinity gradient for these transport factors across the NPC and a transport cofactor concentration gradient across the nuclear envelope (GSP1 and GSP2 GTPases associated predominantly with GTP in the nucleus, with GDP in the cytoplasm). The chain is Nucleoporin NUP152 (NUP152) from Chaetomium thermophilum (strain DSM 1495 / CBS 144.50 / IMI 039719) (Thermochaetoides thermophila).